Consider the following 377-residue polypeptide: Mucin-7 (377 aa).

The signal sequence occupies residues 1 to 22 (MKTLPLFVCICALSACFSFSEG). The segment at 70 to 100 (CRPKLPPSPNNPPKFPNPHQPPKHPDKNSSV) is disordered. A compositionally biased stretch (pro residues) spans 73-89 (KLPPSPNNPPKFPNPHQ). 4 N-linked (GlcNAc...) asparagine glycosylation sites follow: N97, N128, N135, and N146. The segment at 150 to 355 (SVATLAPVNS…QPTSAPGQNK (206 aa)) is disordered. Repeat copies occupy residues 165 to 187 (TTAA…APPE), 188 to 210 (TTAA…APPE), 211 to 233 (TTAA…APPE), 234 to 256 (TTAA…APPE), 257 to 279 (TTAV…APPE), and 280 to 302 (TTAA…APQE). Residues 169 to 183 (PPTPSATTPAPPSSS) show a composition bias toward pro residues. The O-linked (GalNAc) threonine; by GALNT13 glycan is linked to T176. O-linked (GalNAc) serine; by GALNT13 glycosylation is found at S182 and S183. Over residues 184 to 214 (APPETTAAPPTPSATTQAPPSSSAPPETTAA) the composition is skewed to low complexity. Residues T188 and T189 are each glycosylated (O-linked (GalNAc) threonine; by GALNT13). Positions 215-229 (PPTPPATTPAPPSSS) are enriched in pro residues. The span at 230-283 (APPETTAAPPTPSATTPAPLSSSAPPETTAVPPTPSATTLDPSSASAPPETTAA) shows a compositional bias: low complexity. Positions 284–298 (PPTPSATTPAPPSSP) are enriched in pro residues. Polar residues predominate over residues 309-329 (TTPNSSPTTLAPDTSETSAAP). The segment covering 330 to 348 (THQTTTSVTTQTTTTKQPT) has biased composition (low complexity).

In terms of assembly, monomer. N- and O-glycosylated. Contains fucose, mannose, galactose, N-acetylglucosamine and N-acetylgalactosamine. As to expression, expressed in salivary gland tissues and only in those that contain mucous acinar cells (e.g. sublingual and submandibular glands) and not in salivary glands containing only serous acinar cells (e.g. parotid gland).

Its subcellular location is the secreted. May function in a protective capacity by promoting the clearance of bacteria in the oral cavity and aiding in mastication, speech, and swallowing. Binds P.aeruginosa pili. The sequence is that of Mucin-7 (MUC7) from Homo sapiens (Human).